An 80-amino-acid chain; its full sequence is Large ribosomal subunit protein bL31B (80 aa).

The protein belongs to the bacterial ribosomal protein bL31 family. Type B subfamily. As to quaternary structure, part of the 50S ribosomal subunit.

The chain is Large ribosomal subunit protein bL31B from Stenotrophomonas maltophilia (strain K279a).